The chain runs to 722 residues: Probable C-mannosyltransferase DPY19L4 (722 aa).

The segment at 1–34 (MAKEEGTSVEPRQRKKQRTSGSQEAKAEKIRRTP) is disordered. Ala2 bears the N-acetylalanine mark. The span at 25 to 34 (AKAEKIRRTP) shows a compositional bias: basic and acidic residues. 12 consecutive transmembrane segments (helical) span residues 51 to 71 (IVIG…YLSA), 160 to 177 (VYFY…YVTA), 183 to 201 (WLMS…WFLI), 246 to 262 (FCYL…MMVW), 268 to 284 (VLFL…IFSV), 291 to 307 (YEVY…GYLL), 313 to 331 (ALLV…LVKC), 351 to 369 (FYLL…KMFV), 420 to 440 (LLPF…QVFF), 465 to 485 (IIYH…MEGL), 487 to 507 (FIWT…PELW), and 521 to 541 (PMLL…LSLW).

It belongs to the dpy-19 family.

The protein localises to the membrane. In terms of biological role, probable C-mannosyltransferase that mediates C-mannosylation of tryptophan residues on target proteins. This chain is Probable C-mannosyltransferase DPY19L4 (Dpy19l4), found in Mus musculus (Mouse).